Reading from the N-terminus, the 330-residue chain is Lactamase-like protein nscB (330 aa).

4 residues coordinate Zn(2+): histidine 97, histidine 99, aspartate 101, and histidine 102. The Proton donor/acceptor role is filled by aspartate 101.

It belongs to the metallo-beta-lactamase superfamily. Requires Zn(2+) as cofactor.

It functions in the pathway secondary metabolite biosynthesis. Functionally, lactamase-like protein; part of the gene cluster that mediates the biosynthesis of neosartoricin, a prenylated anthracenone that exhibits T-cell antiproliferative activity, suggestive of a physiological role as an immunosuppressive agent. The non-reducing polyketide synthase nscA probably synthesizes and cyclizes the decaketide backbone. The hydrolase nscB then mediates the product release through hydrolysis followed by spontaneous decarboxylation. The prenyltransferase nscD catalyzes the addition of the dimethylallyl group to the aromatic C5. The FAD-dependent monooxygenase nscC is then responsible for the stereospecific hydroxylation at C2. There is no gene encoding O-acetyltransferase in the nsc gene cluster; thus, the last step of 2-O-acetylation leading to neosartoricin may be catalyzed by an unidentified O-acetyltransferase. The polypeptide is Lactamase-like protein nscB (Aspergillus fumigatus (strain ATCC MYA-4609 / CBS 101355 / FGSC A1100 / Af293) (Neosartorya fumigata)).